A 611-amino-acid polypeptide reads, in one-letter code: ANK repeat-containing protein nipk-1 (611 aa).

A coiled-coil region spans residues 91 to 149 (NSKSKKKTENQETKEKDEEAEEKKDGPPKDDKELKMKKEKEQEDENAELDEQKKDGDLL). Disordered stretches follow at residues 92–167 (SKSK…SHPY), 212–255 (ISAS…DTSR), and 280–333 (TKEE…LSPR). Basic and acidic residues predominate over residues 97-131 (KTENQETKEKDEEAEEKKDGPPKDDKELKMKKEKE). Composition is skewed to polar residues over residues 212–223 (ISASTTPDTVLS), 239–255 (ESLQ…DTSR), and 315–333 (GTCS…LSPR). 5 ANK repeats span residues 375–405 (DGDT…TMNE), 417–446 (FGET…SPNS), 452–482 (VGDS…RVNE), 486–527 (DGQT…DPTI), and 532–561 (TGKT…EDTF).

The protein belongs to the iASPP family. In terms of tissue distribution, expressed in the nervous system.

Functionally, acts downstream of the receptor complex composed of ilcr-1 and ilcr-2, which is a signaling complex that modulates neuronal activity and animal behavior in response to sensory neuron input. Mediates signaling of the complex. The polypeptide is ANK repeat-containing protein nipk-1 (Caenorhabditis elegans).